A 451-amino-acid polypeptide reads, in one-letter code: tRNA-2-methylthio-N(6)-dimethylallyladenosine synthase (451 aa).

An MTTase N-terminal domain is found at 10–128 (KKFYTLTFGC…FPQLLEHVMQ (119 aa)). The [4Fe-4S] cluster site is built by Cys19, Cys55, Cys89, Cys165, Cys169, and Cys172. Residues 151 to 381 (REDSIKAWVV…ISVQQEISEQ (231 aa)) form the Radical SAM core domain. Residues 384–447 (KDLENTVQRI…SWNLYGEIFE (64 aa)) form the TRAM domain.

This sequence belongs to the methylthiotransferase family. MiaB subfamily. As to quaternary structure, monomer. [4Fe-4S] cluster serves as cofactor.

The protein resides in the cytoplasm. It carries out the reaction N(6)-dimethylallyladenosine(37) in tRNA + (sulfur carrier)-SH + AH2 + 2 S-adenosyl-L-methionine = 2-methylsulfanyl-N(6)-dimethylallyladenosine(37) in tRNA + (sulfur carrier)-H + 5'-deoxyadenosine + L-methionine + A + S-adenosyl-L-homocysteine + 2 H(+). Functionally, catalyzes the methylthiolation of N6-(dimethylallyl)adenosine (i(6)A), leading to the formation of 2-methylthio-N6-(dimethylallyl)adenosine (ms(2)i(6)A) at position 37 in tRNAs that read codons beginning with uridine. The sequence is that of tRNA-2-methylthio-N(6)-dimethylallyladenosine synthase from Natranaerobius thermophilus (strain ATCC BAA-1301 / DSM 18059 / JW/NM-WN-LF).